The sequence spans 212 residues: Regulator of G-protein signaling 2 (212 aa).

Disordered stretches follow at residues 11-33 (HDCGPMDKSAGTGPKSEEKREKM) and 48-69 (FLQNSSSPGKPKTGKKSKPQTF). The tract at residues 32–66 (KMKRTLLKDWKTRLSYFLQNSSSPGKPKTGKKSKP) is necessary for membrane association. The necessary to inhibit protein synthesis stretch occupies residues 79 to 116 (LWAEAFDELLASKYGLAAFRAFLKSEFCEENIEFWLAC). Residues 83–199 (AFDELLASKY…LESEFYQDLC (117 aa)) enclose the RGS domain.

As to quaternary structure, interacts with GNAQ. Does not interact with GNAI1 and GNAI3. Interacts with EIF2B5. Interacts with PRKG1 (isoform alpha). Post-translationally, phosphorylated by protein kinase C. Phosphorylation by PRKG1 leads to activation of RGS2 activity.

It is found in the cell membrane. It localises to the cytoplasm. The protein resides in the nucleus. The protein localises to the nucleolus. Its function is as follows. Regulates G protein-coupled receptor signaling cascades. Inhibits signal transduction by increasing the GTPase activity of G protein alpha subunits, thereby driving them into their inactive GDP-bound form. It is involved in the negative regulation of the angiotensin-activated signaling pathway. Plays a role in the regulation of blood pressure in response to signaling via G protein-coupled receptors and GNAQ. Plays a role in regulating the constriction and relaxation of vascular smooth muscle. Binds EIF2B5 and blocks its activity, thereby inhibiting the translation of mRNA into protein. The chain is Regulator of G-protein signaling 2 (RGS2) from Sus scrofa (Pig).